The sequence spans 198 residues: uncharacterized protein (198 aa).

Residues Met1–Ala28 form the signal peptide.

It belongs to the fimbrial protein family.

The protein resides in the fimbrium. Functionally, part of the yadCKLM-htrE-yadVN fimbrial operon. Could contribute to adhesion to various surfaces in specific environmental niches. This is an uncharacterized protein from Escherichia coli (strain K12).